The primary structure comprises 206 residues: Inosine triphosphate pyrophosphatase (206 aa).

21–26 (TGNAKK) contributes to the ITP binding site. E49 is a Mg(2+) binding site. ITP contacts are provided by residues K61, 77–78 (DT), K94, 153–156 (FGWD), K176, and 181–182 (HR).

The protein belongs to the HAM1 NTPase family. In terms of assembly, homodimer. Mg(2+) serves as cofactor. Mn(2+) is required as a cofactor.

The protein localises to the cytoplasm. It carries out the reaction ITP + H2O = IMP + diphosphate + H(+). The catalysed reaction is dITP + H2O = dIMP + diphosphate + H(+). It catalyses the reaction XTP + H2O = XMP + diphosphate + H(+). Functionally, pyrophosphatase that hydrolyzes non-canonical purine nucleotides such as inosine triphosphate (ITP), deoxyinosine triphosphate (dITP) or xanthosine 5'-triphosphate (XTP) to their respective monophosphate derivatives. The enzyme does not distinguish between the deoxy- and ribose forms. Probably excludes non-canonical purines from RNA and DNA precursor pools, thus preventing their incorporation into RNA and DNA and avoiding chromosomal lesions. The polypeptide is Inosine triphosphate pyrophosphatase (Vitis vinifera (Grape)).